The primary structure comprises 163 residues: Large ribosomal subunit protein uL15 (163 aa).

The protein belongs to the universal ribosomal protein uL15 family. As to quaternary structure, part of the 50S ribosomal subunit.

In terms of biological role, binds to the 23S rRNA. The sequence is that of Large ribosomal subunit protein uL15 from Orientia tsutsugamushi (strain Boryong) (Rickettsia tsutsugamushi).